The sequence spans 142 residues: Large ribosomal subunit protein uL13 (142 aa).

The protein belongs to the universal ribosomal protein uL13 family. Part of the 50S ribosomal subunit.

Functionally, this protein is one of the early assembly proteins of the 50S ribosomal subunit, although it is not seen to bind rRNA by itself. It is important during the early stages of 50S assembly. The chain is Large ribosomal subunit protein uL13 from Xanthomonas oryzae pv. oryzae (strain MAFF 311018).